An 83-amino-acid chain; its full sequence is Small ribosomal subunit protein eS21 (83 aa).

This sequence belongs to the eukaryotic ribosomal protein eS21 family. As to quaternary structure, component of the 40S small ribosomal subunit.

It localises to the cytoplasm. The protein localises to the cytosol. The protein resides in the rough endoplasmic reticulum. The sequence is that of Small ribosomal subunit protein eS21 (RpS21) from Spodoptera frugiperda (Fall armyworm).